The sequence spans 398 residues: Arylacetamide deacetylase (398 aa).

Residues 1–4 are Cytoplasmic-facing; the sequence is GVKT. Residues 5 to 22 form a helical; Signal-anchor for type II membrane protein membrane-spanning segment; that stretch reads VLLLIVGVLGAYYVYTPL. Over 23–398 the chain is Lumenal; that stretch reads PDNIEEPWRL…QYFEWLRENV (376 aa). N-linked (GlcNAc...) asparagine glycosylation is present at Asn77. The Involved in the stabilization of the negatively charged intermediate by the formation of the oxyanion hole signature appears at 110 to 112; that stretch reads HGG. Cys115 and Cys339 are joined by a disulfide. Ser188 is an active-site residue. N-linked (GlcNAc...) asparagine glycosylation is present at Asn281. Catalysis depends on residues Asp342 and His372.

It belongs to the 'GDXG' lipolytic enzyme family. Glycosylated.

The protein resides in the endoplasmic reticulum membrane. Its subcellular location is the microsome membrane. The enzyme catalyses a triacylglycerol + H2O = a diacylglycerol + a fatty acid + H(+). Its activity is regulated as follows. Inhibited by diisopropylphosphofluoridate (DFP). In terms of biological role, displays cellular triglyceride lipase activity in liver, increases the levels of intracellular fatty acids derived from the hydrolysis of newly formed triglyceride stores and plays a role in very low-density lipoprotein assembly. Displays serine esterase activity in liver. Deacetylates a variety of arylacetamide substrates, including xenobiotic compounds and procarcinogens, converting them to the primary arylamide compounds and increasing their toxicity. The sequence is that of Arylacetamide deacetylase from Oryctolagus cuniculus (Rabbit).